We begin with the raw amino-acid sequence, 341 residues long: UPF0283 membrane protein HD_1769 (341 aa).

3 helical membrane passes run 57–77, 86–106, and 204–224; these read LLAV…QCLI, IDLA…GAII, and ENAI…MIAW.

The protein belongs to the UPF0283 family.

Its subcellular location is the cell inner membrane. The sequence is that of UPF0283 membrane protein HD_1769 from Haemophilus ducreyi (strain 35000HP / ATCC 700724).